The following is a 27-amino-acid chain: GFLDIVLHVGLAAGKAALNAVNEAVNQ.

Expressed by the skin glands.

Its subcellular location is the secreted. Has antimicrobial activity. The protein is Cruzioseptin-14 of Cruziohyla calcarifer (Splendid leaf frog).